We begin with the raw amino-acid sequence, 1161 residues long: Voltage-gated inwardly rectifying potassium channel KCNH2 (1161 aa).

Residues 1 to 405 (MPVRRGHVAP…RIHRWTILHY (405 aa)) are Cytoplasmic-facing. Residues 17-88 (TIIRKFEGQS…AAQIAQALLG (72 aa)) form the PAS domain. The region spanning 92–144 (RKVEIAFYRKDGSCFLCLVDVVPVKNEDGAVIMFILNFEVVMEKDMVGSPARD) is the PAC domain. The segment at 233–286 (ALVGSCSPPPPVSAPGPHPSLRAHSLNPDASGSSCSLARTRSRESCASVRRASS) is disordered. S239 and S245 each carry phosphoserine. Over residues 239–250 (SPPPPVSAPGPH) the composition is skewed to pro residues. A compositionally biased stretch (polar residues) spans 260-271 (PDASGSSCSLAR). 4 positions are modified to phosphoserine: S285, S286, S322, and S353. A helical membrane pass occupies residues 406–426 (SPFKAVWDWLILLLVIYTAVF). The Extracellular portion of the chain corresponds to 427–452 (TPYSAAFLLKETEEGPPAPECGYACQ). Residues 453-473 (PLAVVDLIVDIMFIVDILINF) form a helical membrane-spanning segment. Residues 474-497 (RTTYVNANEEVVSHPGRIAVHYFK) are Cytoplasmic-facing. Residues 498–518 (GWFLIDMVAAIPFDLLIFGSG) traverse the membrane as a helical segment. Residues 519–522 (SEEL) lie on the Extracellular side of the membrane. A helical; Voltage-sensor transmembrane segment spans residues 523–543 (IGLLKTARLLRLVRVARKLDR). Residues 544–549 (YSEYGA) are Cytoplasmic-facing. Residues 550-570 (AVLLLLMCTFALIAHWLACIW) form a helical membrane-spanning segment. The Extracellular segment spans residues 571–613 (YAIGNMEQPHMDSRIGWLHNLGDQMGKPYNSSGLGGPSIKDKY). N-linked (GlcNAc...) asparagine glycosylation occurs at N600. Residues 614 to 634 (VTGLYFTFSSLTSVGFGNVSP) constitute an intramembrane region (pore-forming). The Selectivity filter motif lies at 626 to 631 (SVGFGN). Topologically, residues 635-640 (NTNSEK) are extracellular. The helical transmembrane segment at 641-661 (IFSICVMLIGSLMYASIFGNV) threads the bilayer. The Cytoplasmic segment spans residues 662 to 1161 (SAIIQRLYSG…LHRHGSDPGS (500 aa)). Residues 744–844 (PFRGATKDCL…IHRDDLLEVL (101 aa)) form a cNMP-binding domain region. Positions 872-985 (GSPGSTEWEG…TEDCEKSSDT (114 aa)) are disordered. Phosphoserine occurs at positions 873 and 876. Residues 885–894 (RQRKRKLSFR) are compositionally biased toward basic residues. The segment covering 930–941 (GESPSSGPSSPE) has biased composition (low complexity). Pro residues predominate over residues 962–972 (SPRPPGEPPGG). R1016 carries the omega-N-methylarginine modification. The stretch at 1037-1064 (RGDVESRLDALQRQLNRLETRLSADMAT) forms a coiled coil. The tract at residues 1121 to 1161 (ELPPGAPELPQEGPTRRLSLPGQLGALTSQPLHRHGSDPGS) is disordered. At S1139 the chain carries Phosphoserine.

This sequence belongs to the potassium channel family. H (Eag) (TC 1.A.1.20) subfamily. Kv11.1/KCNH2 sub-subfamily. The potassium channel is probably composed of a homo- or heterotetrameric complex of pore-forming alpha subunits that can associate with modulating beta subunits. Interacts with DNAJB12 and DNAJB14; chaperones DNAJB12 and DNAJB14 promote tetramerization. Heteromultimer with KCNH6/ERG2 and KCNH7/ERG3. Interacts with ALG10B. Forms a stable complex with KCNE1 or KCNE2, and that this heteromultimerization regulates Inward rectifier potassium channel activity. Interacts with CANX. The core-glycosylated, but not the fully glycosylated form interacts with RNF207. Interacts with NDFIP1 and NDFIP2; this interaction decreases the cell membrane expression by targeting KCNH2, through interaction with NEDD4L, for the degradation through the multivesicular bodies (MVBs)-lysosomal pathway. In terms of processing, phosphorylated on serine and threonine residues. Phosphorylation by PKA inhibits ion conduction. In terms of tissue distribution, detected in heart, both in atrium and in left ventricle.

The protein localises to the cell membrane. It carries out the reaction K(+)(in) = K(+)(out). Its function is as follows. Pore-forming (alpha) subunit of voltage-gated inwardly rectifying potassium channel. Characterized by unusual gating kinetics by producing relatively small outward currents during membrane depolarization and large inward currents during subsequent repolarization which reflect a rapid inactivation during depolarization and quick recovery from inactivation but slow deactivation (closing) during repolarization. Channel properties are modulated by cAMP and subunit assembly. Forms a stable complex with KCNE1 or KCNE2, and that this heteromultimerization regulates inward rectifier potassium channel activity. The protein is Voltage-gated inwardly rectifying potassium channel KCNH2 of Oryctolagus cuniculus (Rabbit).